The following is a 52-amino-acid chain: Light-harvesting protein B800/830/1020 alpha-1 chain (52 aa).

The Cytoplasmic portion of the chain corresponds to 1–12 (MWRIWKVFDPRR). Residues 13–33 (ILIATAIWLIIIALTIHVILM) form a helical membrane-spanning segment. H29 contributes to the a bacteriochlorophyll binding site. The Periplasmic segment spans residues 34-52 (TTERFNWLEGAPAAEYYSS).

It belongs to the antenna complex alpha subunit family. In terms of assembly, the core complex is formed by different alpha and beta chains, binding bacteriochlorophyll molecules, and arranged most probably in tetrameric structures disposed around the reaction center. The non-pigmented gamma chains may constitute additional components.

It localises to the cell inner membrane. Its function is as follows. Antenna complexes are light-harvesting systems, which transfer the excitation energy to the reaction centers. This chain is Light-harvesting protein B800/830/1020 alpha-1 chain, found in Halorhodospira halochloris (Ectothiorhodospira halochloris).